The chain runs to 130 residues: ATP synthase epsilon chain, chloroplastic (130 aa).

The protein belongs to the ATPase epsilon chain family. F-type ATPases have 2 components, CF(1) - the catalytic core - and CF(0) - the membrane proton channel. CF(1) has five subunits: alpha(3), beta(3), gamma(1), delta(1), epsilon(1). CF(0) has three main subunits: a, b and c.

It is found in the plastid. Its subcellular location is the chloroplast thylakoid membrane. In terms of biological role, produces ATP from ADP in the presence of a proton gradient across the membrane. The polypeptide is ATP synthase epsilon chain, chloroplastic (Emiliania huxleyi (Coccolithophore)).